A 464-amino-acid polypeptide reads, in one-letter code: Argininosuccinate lyase (464 aa).

Alanine 2 bears the N-acetylalanine mark. N6-acetyllysine is present on lysine 7. Serine 27 provides a ligand contact to 2-(N(omega)-L-arginino)succinate. Lysine 69 is subject to N6-acetyllysine. The 2-(N(omega)-L-arginino)succinate site is built by asparagine 114 and threonine 159. Catalysis depends on histidine 160, which acts as the Proton acceptor. The active-site Proton donor is the serine 281. Residue lysine 288 is modified to N6-acetyllysine. 2-(N(omega)-L-arginino)succinate is bound by residues asparagine 289, tyrosine 321, glutamine 326, and lysine 329.

It belongs to the lyase 1 family. Argininosuccinate lyase subfamily. As to quaternary structure, homotetramer. Forms tissue-specific complexes with ASS1, SLC7A1, HSP90AA1 and nitric oxide synthase NOS1, NOS2 or NOS3; the complex maintenance is independent of ASL catalytic function. Acetylation modifies enzyme activity in response to alterations of extracellular nutrient availability. Acetylation increased with trichostin A (TSA) or with nicotinamide (NAM). Glucose increases acetylation by about a factor of 3 with decreasing enzyme activity. Acetylation on Lys-288 is decreased on the addition of extra amino acids resulting in activation of enzyme activity.

The catalysed reaction is 2-(N(omega)-L-arginino)succinate = fumarate + L-arginine. It functions in the pathway amino-acid biosynthesis; L-arginine biosynthesis; L-arginine from L-ornithine and carbamoyl phosphate: step 3/3. The protein operates within nitrogen metabolism; urea cycle; L-arginine and fumarate from (N(omega)-L-arginino)succinate: step 1/1. Its activity is regulated as follows. Enzyme activity is regulated by acetylation. Functionally, catalyzes the reversible cleavage of L-argininosuccinate to fumarate and L-arginine, an intermediate step reaction in the urea cycle mostly providing for hepatic nitrogen detoxification into excretable urea as well as de novo L-arginine synthesis in nonhepatic tissues. Essential regulator of intracellular and extracellular L-arginine pools. As part of citrulline-nitric oxide cycle, forms tissue-specific multiprotein complexes with argininosuccinate synthase ASS1, transport protein SLC7A1 and nitric oxide synthase NOS1, NOS2 or NOS3, allowing for cell-autonomous L-arginine synthesis while channeling extracellular L-arginine to nitric oxide synthesis pathway. This Macaca fascicularis (Crab-eating macaque) protein is Argininosuccinate lyase (ASL).